A 525-amino-acid chain; its full sequence is GMP synthase [glutamine-hydrolyzing] (525 aa).

Residues 8–207 (KILILDFGSQ…ALDICGCAAN (200 aa)) form the Glutamine amidotransferase type-1 domain. Cysteine 85 functions as the Nucleophile in the catalytic mechanism. Catalysis depends on residues histidine 181 and glutamate 183. Residues 208–400 (WKPSSIIEDA…LGLPYNMLYR (193 aa)) enclose the GMPS ATP-PPase domain. ATP is bound at residue 235-241 (SGGVDSS).

In terms of assembly, homodimer.

It catalyses the reaction XMP + L-glutamine + ATP + H2O = GMP + L-glutamate + AMP + diphosphate + 2 H(+). It functions in the pathway purine metabolism; GMP biosynthesis; GMP from XMP (L-Gln route): step 1/1. Catalyzes the synthesis of GMP from XMP. In Shewanella oneidensis (strain ATCC 700550 / JCM 31522 / CIP 106686 / LMG 19005 / NCIMB 14063 / MR-1), this protein is GMP synthase [glutamine-hydrolyzing].